Reading from the N-terminus, the 411-residue chain is Serine--tRNA ligase (411 aa).

Residue 226–228 (TSE) coordinates L-serine. 257–259 (RKE) is a binding site for ATP. Glu-280 is a binding site for L-serine. 344–347 (EISS) contacts ATP. Position 379 (Ser-379) interacts with L-serine.

The protein belongs to the class-II aminoacyl-tRNA synthetase family. Type-1 seryl-tRNA synthetase subfamily. In terms of assembly, homodimer. The tRNA molecule binds across the dimer.

The protein resides in the cytoplasm. It carries out the reaction tRNA(Ser) + L-serine + ATP = L-seryl-tRNA(Ser) + AMP + diphosphate + H(+). It catalyses the reaction tRNA(Sec) + L-serine + ATP = L-seryl-tRNA(Sec) + AMP + diphosphate + H(+). The protein operates within aminoacyl-tRNA biosynthesis; selenocysteinyl-tRNA(Sec) biosynthesis; L-seryl-tRNA(Sec) from L-serine and tRNA(Sec): step 1/1. Functionally, catalyzes the attachment of serine to tRNA(Ser). Is also able to aminoacylate tRNA(Sec) with serine, to form the misacylated tRNA L-seryl-tRNA(Sec), which will be further converted into selenocysteinyl-tRNA(Sec). This Campylobacter jejuni subsp. doylei (strain ATCC BAA-1458 / RM4099 / 269.97) protein is Serine--tRNA ligase.